The following is a 356-amino-acid chain: Tyrosine recombinase XerS (356 aa).

The 106-residue stretch at 16-121 (IMPWFVLDYY…ALSSLYKYLT (106 aa)) folds into the Core-binding (CB) domain. The region spanning 169–354 (EFLDYVDCEY…VNDEQKNALD (186 aa)) is the Tyr recombinase domain. Catalysis depends on residues Arg-210, Lys-234, His-306, Arg-309, and His-332. Residue Tyr-341 is the O-(3'-phospho-DNA)-tyrosine intermediate of the active site.

Belongs to the 'phage' integrase family. XerS subfamily.

It is found in the cytoplasm. With respect to regulation, ftsK is required for recombination. Functionally, site-specific tyrosine recombinase, which acts by catalyzing the cutting and rejoining of the recombining DNA molecules. Essential to convert dimers of the bacterial chromosome into monomers to permit their segregation at cell division. The protein is Tyrosine recombinase XerS of Streptococcus uberis (strain ATCC BAA-854 / 0140J).